A 962-amino-acid polypeptide reads, in one-letter code: Activity-dependent neuroprotective protein 2a (962 aa).

The segment at 75–98 (LCCSLCWYSSRSVPTFRSHIHRCH) adopts a C2H2-type 1 zinc-finger fold. A C2H2-type 2; degenerate zinc finger spans residues 108 to 130 (LMCPYCPFVSSPKVTEQHIQFFH). The segment at 165 to 188 (YTCATCGYHDSLLYVMKKHVLVNH) adopts a C2H2-type 3; degenerate zinc-finger fold. A C2H2-type 4 zinc finger spans residues 219-244 (YHCKLCKLPAETIEHLLYHILSSEKH). The C2H2-type 5; degenerate zinc finger occupies 527–547 (VKCLRCKILLTEQGIFQHLLH). 2 consecutive C2H2-type zinc fingers follow at residues 549–572 (LKCLFCPQMFYSFKQIMEHSKKEH) and 650–673 (NACPFCQVKLQNPEDYELHLQTKH). The C2H2-type 8; degenerate zinc finger occupies 688–712 (YKCIYCFGVYTEKSTPKTISIHVQR). A disordered region spans residues 753–781 (QGAPEFPKPKKEAVTPRNRRRNTKASKTG). The segment at residues 795-854 (PMGMERTSFEDRKDFLSQYFHRKPYVTKTEIELLASRLWINKADVKAHFNSKLTKCLKAI) is a DNA-binding region (homeobox).

It is found in the nucleus. May be involved in transcriptional regulation. Required for progression through late erythroid differentiation. May be involved in vasculogenesis. This is Activity-dependent neuroprotective protein 2a from Danio rerio (Zebrafish).